A 1196-amino-acid chain; its full sequence is DNA-directed RNA polymerase subunit beta (1196 aa).

Residues 1152–1165 (EEEIEMRDLEDEED) are compositionally biased toward acidic residues. The segment at 1152-1196 (EEEIEMRDLEDEEDAKQADGLALSGDEAPEETASPDVERDAVTKE) is disordered. The segment covering 1187–1196 (DVERDAVTKE) has biased composition (basic and acidic residues).

It belongs to the RNA polymerase beta chain family. As to quaternary structure, the RNAP catalytic core consists of 2 alpha, 1 beta, 1 beta' and 1 omega subunit. When a sigma factor is associated with the core the holoenzyme is formed, which can initiate transcription.

The enzyme catalyses RNA(n) + a ribonucleoside 5'-triphosphate = RNA(n+1) + diphosphate. In terms of biological role, DNA-dependent RNA polymerase catalyzes the transcription of DNA into RNA using the four ribonucleoside triphosphates as substrates. The sequence is that of DNA-directed RNA polymerase subunit beta from Bacillus velezensis (strain DSM 23117 / BGSC 10A6 / LMG 26770 / FZB42) (Bacillus amyloliquefaciens subsp. plantarum).